The following is a 380-amino-acid chain: Cytochrome b (380 aa).

A run of 4 helical transmembrane segments spans residues 34 to 54 (FGSLLGICLITQIITGLLLAM), 78 to 99 (WLIRHLHANGASFFFICIYLHI), 114 to 134 (WNIGVILLLTLMATAFVGYVL), and 179 to 199 (LFALHFLLPFVIAGLTLVHLT). The heme b site is built by H84 and H98. H183 and H197 together coordinate heme b. H202 provides a ligand contact to a ubiquinone. 4 helical membrane-spanning segments follow: residues 227–247 (IKDLLGFVLMLTPLIAMALFA), 289–309 (LGGVLALAASVLVLFLIPLLH), 321–341 (LSQMLFWTLVADLLILTWVGS), and 348–368 (FIIIGQLASLAYFTIILVLFP).

This sequence belongs to the cytochrome b family. In terms of assembly, the cytochrome bc1 complex contains 11 subunits: 3 respiratory subunits (MT-CYB, CYC1 and UQCRFS1), 2 core proteins (UQCRC1 and UQCRC2) and 6 low-molecular weight proteins (UQCRH/QCR6, UQCRB/QCR7, UQCRQ/QCR8, UQCR10/QCR9, UQCR11/QCR10 and a cleavage product of UQCRFS1). This cytochrome bc1 complex then forms a dimer. Heme b is required as a cofactor.

It is found in the mitochondrion inner membrane. Functionally, component of the ubiquinol-cytochrome c reductase complex (complex III or cytochrome b-c1 complex) that is part of the mitochondrial respiratory chain. The b-c1 complex mediates electron transfer from ubiquinol to cytochrome c. Contributes to the generation of a proton gradient across the mitochondrial membrane that is then used for ATP synthesis. This Aphelocoma coerulescens (Florida scrub-jay) protein is Cytochrome b (MT-CYB).